A 391-amino-acid polypeptide reads, in one-letter code: Xylose isomerase (391 aa).

Catalysis depends on residues His-54 and Asp-57. Positions 181, 217, 220, 245, 255, 257, and 287 each coordinate Mg(2+).

This sequence belongs to the xylose isomerase family. In terms of assembly, homotetramer. Requires Mg(2+) as cofactor.

It localises to the cytoplasm. The enzyme catalyses alpha-D-xylose = alpha-D-xylulofuranose. Functionally, involved in D-xylose catabolism. This chain is Xylose isomerase (xylA), found in Streptomyces albus G.